A 101-amino-acid chain; its full sequence is Small ribosomal subunit protein uS14 (101 aa).

This sequence belongs to the universal ribosomal protein uS14 family. In terms of assembly, part of the 30S ribosomal subunit. Contacts proteins S3 and S10.

Binds 16S rRNA, required for the assembly of 30S particles and may also be responsible for determining the conformation of the 16S rRNA at the A site. This is Small ribosomal subunit protein uS14 from Serratia proteamaculans (strain 568).